We begin with the raw amino-acid sequence, 268 residues long: Tryptophan synthase alpha chain (268 aa).

Catalysis depends on proton acceptor residues Glu49 and Asp60.

It belongs to the TrpA family. Tetramer of two alpha and two beta chains.

The enzyme catalyses (1S,2R)-1-C-(indol-3-yl)glycerol 3-phosphate + L-serine = D-glyceraldehyde 3-phosphate + L-tryptophan + H2O. The protein operates within amino-acid biosynthesis; L-tryptophan biosynthesis; L-tryptophan from chorismate: step 5/5. The alpha subunit is responsible for the aldol cleavage of indoleglycerol phosphate to indole and glyceraldehyde 3-phosphate. In Edwardsiella ictaluri (strain 93-146), this protein is Tryptophan synthase alpha chain.